The primary structure comprises 592 residues: Tetrathionate sensor histidine kinase TtrS (592 aa).

A run of 2 helical transmembrane segments spans residues 11 to 31 and 307 to 327; these read VLAA…NIGI and VGGV…VMLL. Residues 364-581 form the Histidine kinase domain; it reads GFAHELNQPL…VVTIHFLHEN (218 aa). Phosphohistidine; by autocatalysis is present on His367.

Autophosphorylated.

It localises to the cell inner membrane. It carries out the reaction ATP + protein L-histidine = ADP + protein N-phospho-L-histidine.. Functionally, member of the two-component regulatory system TtrR/TtrS, which is required for synthesis of tetrathionate reductase. Probably functions as a sensor protein kinase which is autophosphorylated at a histidine residue in response to tetrathionate, and transfers its phosphate group to TtrR. During mice infection, the ability to use tetrathionate as an electron acceptor is a growth advantage for S.typhimurium over the competing microbiota in the lumen of the inflamed gut. The protein is Tetrathionate sensor histidine kinase TtrS (ttrS) of Salmonella typhimurium (strain LT2 / SGSC1412 / ATCC 700720).